Here is a 136-residue protein sequence, read N- to C-terminus: MFAQRQMFFARLAANLRAPAVRQTVQRRFASTPANESGKNAFVREREAVKQHAAETTELWRKISLYGIPPALALAGYNAYTLYNEHWEHWSHLPPLEERTEYPYQNIRTRNYPWGDGDKTLFWNESVNYHNRDKVT.

The transit peptide at 1-29 (MFAQRQMFFARLAANLRAPAVRQTVQRRF) directs the protein to the mitochondrion. The Mitochondrial matrix portion of the chain corresponds to 30–62 (ASTPANESGKNAFVREREAVKQHAAETTELWRK). A helical membrane pass occupies residues 63–83 (ISLYGIPPALALAGYNAYTLY). Residues 84-136 (NEHWEHWSHLPPLEERTEYPYQNIRTRNYPWGDGDKTLFWNESVNYHNRDKVT) are Mitochondrial intermembrane-facing.

The protein belongs to the cytochrome c oxidase subunit 6A family. In terms of assembly, component of the cytochrome c oxidase (complex IV, CIV), a multisubunit enzyme composed of 11 subunits. The complex is composed of a catalytic core of 3 subunits Cox1, Cox2 and Cox3, encoded in the mitochondrial DNA, and 8 supernumerary subunits Cox4, Cox5a/Cox5, Cox6, Cox7, Cox8, Cox7a/Cox9, Cox6b/Cox12 and Cox6a/Cox13, which are encoded in the nuclear genome. The complex exists as a monomer or a dimer and forms respiratory supercomplexes (SCs) in the inner mitochondrial membrane with NADH-ubiquinone oxidoreductase (complex I, CI) and ubiquinol-cytochrome c oxidoreductase (cytochrome b-c1 complex, complex III, CIII), resulting in various different assemblies (supercomplexes I(1)IV(1), I(1)III(3)IV(2), III(2)IV(1) and III(2)IV(2) as well as larger supercomplexes of compositions like I(1)III(2)IV(5-6)). Cox6a/Cox13 was not present in the cryo-EM structure. It may be involved in complex IV dimer formation and might not be always expressed. This would explain its absence in the map of the isolated monomer.

The protein resides in the mitochondrion inner membrane. It functions in the pathway energy metabolism; oxidative phosphorylation. Functionally, component of the cytochrome c oxidase, the last enzyme in the mitochondrial electron transport chain which drives oxidative phosphorylation. The respiratory chain contains 3 multisubunit complexes succinate dehydrogenase (complex II, CII), ubiquinol-cytochrome c oxidoreductase (cytochrome b-c1 complex, complex III, CIII) and cytochrome c oxidase (complex IV, CIV), that cooperate to transfer electrons derived from NADH and succinate to molecular oxygen, creating an electrochemical gradient over the inner membrane that drives transmembrane transport and the ATP synthase. Cytochrome c oxidase is the component of the respiratory chain that catalyzes the reduction of oxygen to water. Electrons originating from reduced cytochrome c in the intermembrane space (IMS) are transferred via the dinuclear copper A center (CU(A)) of Cox2 and heme A of Cox1 to the active site in Cox1, a binuclear center (BNC) formed by heme A3 and copper B (CU(B)). The BNC reduces molecular oxygen to 2 water molecules using 4 electrons from cytochrome c in the IMS and 4 protons from the mitochondrial matrix. The protein is Cytochrome c oxidase subunit 13, mitochondrial (eat-5) of Neurospora crassa (strain ATCC 24698 / 74-OR23-1A / CBS 708.71 / DSM 1257 / FGSC 987).